The primary structure comprises 309 residues: Acetylglutamate kinase (309 aa).

Substrate-binding positions include 82–83 (GG), Arg-104, and Asn-206.

This sequence belongs to the acetylglutamate kinase family. ArgB subfamily.

The protein resides in the cytoplasm. It catalyses the reaction N-acetyl-L-glutamate + ATP = N-acetyl-L-glutamyl 5-phosphate + ADP. Its pathway is amino-acid biosynthesis; L-arginine biosynthesis; N(2)-acetyl-L-ornithine from L-glutamate: step 2/4. In terms of biological role, catalyzes the ATP-dependent phosphorylation of N-acetyl-L-glutamate. The polypeptide is Acetylglutamate kinase (Cupriavidus pinatubonensis (strain JMP 134 / LMG 1197) (Cupriavidus necator (strain JMP 134))).